Consider the following 563-residue polypeptide: Quinidine resistance protein 1 (563 aa).

Polar residues predominate over residues 1–10; it reads MTKQQTSVMR. The segment at 1–50 is disordered; sequence MTKQQTSVMRNASIAKEEREGSDNNNVDRSSSDAISDNDAERSNSHSEID. Topologically, residues 1 to 75 are cytoplasmic; the sequence is MTKQQTSVMR…KQKMLLVVQC (75 aa). Positions 23–33 are enriched in low complexity; that stretch reads DNNNVDRSSSD. The segment covering 39 to 49 has biased composition (basic and acidic residues); it reads DAERSNSHSEI. The chain crosses the membrane as a helical span at residues 76 to 96; sequence AFTGFFSTVAGSIYYPVLTII. Residues 97 to 108 are Extracellular-facing; that stretch reads ERKFNITEELAN. A helical membrane pass occupies residues 109-129; it reads VTIVVYFIFQGVAPSIMGGLA. Residues 130 to 135 lie on the Cytoplasmic side of the membrane; that stretch reads DTFGRR. Residues 136 to 156 traverse the membrane as a helical segment; the sequence is PIVLWAILAYFCACIGLACAH. Over 157 to 165 the chain is Extracellular; sequence NYAQILALR. A helical transmembrane segment spans residues 166–186; sequence CLQAAGISPVIAINSGIMGDV. Residues 187 to 195 are Cytoplasmic-facing; sequence TTKVERGGY. The chain crosses the membrane as a helical span at residues 196–216; it reads VGLVAGFQVVGTAFGALIGAG. Over 217-224 the chain is Extracellular; the sequence is LSSKWGWR. Residues 225–245 traverse the membrane as a helical segment; the sequence is AIFWFLAIGSGICLVFSTLLM. The Cytoplasmic segment spans residues 246–296; it reads PETKRTLVGNGSVTPRSFLNRSLILHVGSVKKTLHLDDPDPETLEPRTSVD. A helical membrane pass occupies residues 297 to 317; sequence FLAPLKILHIREIDILLSIAG. Residues 318 to 341 lie on the Extracellular side of the membrane; that stretch reads LQFSTWTTHQTALTIVLSKKYNLS. A helical transmembrane segment spans residues 342–362; it reads VAKIGLCFLPAGISTLTSIIS. At 363–421 the chain is on the cytoplasmic side; that stretch reads AGRYLNWSYRTRKVKYNRWIKEQELQLMEKYKGDKNKVAELIHSNSHYAFNLVEARLHP. Residues 422–442 form a helical membrane-spanning segment; sequence AFVTLLLSSIGFTAFGWCISV. Residues 443–445 lie on the Extracellular side of the membrane; that stretch reads KTP. A helical transmembrane segment spans residues 446 to 466; sequence LAAVLCTSAFASLFSNCILTF. Over 467–481 the chain is Cytoplasmic; that stretch reads STTLIVDLFPSKAST. A helical transmembrane segment spans residues 482 to 502; it reads ATGCLNLFRCLLSAIFIAALT. At 503–511 the chain is on the extracellular side; sequence KMVEKMRYG. A helical transmembrane segment spans residues 512–532; it reads GVFTFLSAITSSSSLLLFYLL. Residues 533–563 lie on the Cytoplasmic side of the membrane; that stretch reads KNGKQLSFDRIRANDKSAGRSVGKNSEKVST.

This sequence belongs to the major facilitator superfamily. CAR1 family.

The protein localises to the cell membrane. Functionally, multidrug resistance transporter involved in resistance and adaptation to quinidine and ketoconazole. This Saccharomyces cerevisiae (strain ATCC 204508 / S288c) (Baker's yeast) protein is Quinidine resistance protein 1 (QDR1).